A 337-amino-acid polypeptide reads, in one-letter code: MLYSLIRPALFSLDAEDAHGLTLTGLDVAQRLGLVGLQPRATGKPVQVMGIDFPNAVGLAAGLDKDGAHLKGLAALGFGFLEIGTVTPRPQPGNPKPRLFRLPAAEGIINRMGFNNLGVDNLVRNVVASGYTGVLGINIGKNKDTPNERAADDYLACLDKVYAHARYVTVNISSPNTQNLRELQQDEALDALLSAIKLRQSELAQQHGRYVPIALKIAPDLDEAQIAAIAALLMRHGIDAVIATNTTIARDAVAGLPNANESGGLSGAPVREASTRVVRTLAQHLGGALPIIGVGGILSGDDARAKIAAGASLVQLYSGLIYRGPGLVRECVERLAQ.

Residues 61–65 (AGLDK) and T85 each bind FMN. K65 contacts substrate. A substrate-binding site is contributed by 110–114 (NRMGF). Positions 138 and 171 each coordinate FMN. N171 contributes to the substrate binding site. S174 acts as the Nucleophile in catalysis. A substrate-binding site is contributed by N176. Residues K216 and T244 each coordinate FMN. 245 to 246 (NT) serves as a coordination point for substrate. Residues G267, G296, and 317 to 318 (YS) each bind FMN.

The protein belongs to the dihydroorotate dehydrogenase family. Type 2 subfamily. In terms of assembly, monomer. Requires FMN as cofactor.

The protein localises to the cell membrane. The enzyme catalyses (S)-dihydroorotate + a quinone = orotate + a quinol. The protein operates within pyrimidine metabolism; UMP biosynthesis via de novo pathway; orotate from (S)-dihydroorotate (quinone route): step 1/1. Functionally, catalyzes the conversion of dihydroorotate to orotate with quinone as electron acceptor. The sequence is that of Dihydroorotate dehydrogenase (quinone) from Thiobacillus denitrificans (strain ATCC 25259 / T1).